Here is a 364-residue protein sequence, read N- to C-terminus: DNA polymerase IV (364 aa).

The UmuC domain maps to 14–198 (IIHIDMDAFF…LPIEKFHGVG (185 aa)). Mg(2+)-binding residues include Asp18 and Asp116. Glu117 is a catalytic residue.

The protein belongs to the DNA polymerase type-Y family. Monomer. Mg(2+) serves as cofactor.

The protein localises to the cytoplasm. The enzyme catalyses DNA(n) + a 2'-deoxyribonucleoside 5'-triphosphate = DNA(n+1) + diphosphate. In terms of biological role, poorly processive, error-prone DNA polymerase involved in untargeted mutagenesis. Copies undamaged DNA at stalled replication forks, which arise in vivo from mismatched or misaligned primer ends. These misaligned primers can be extended by PolIV. Exhibits no 3'-5' exonuclease (proofreading) activity. May be involved in translesional synthesis, in conjunction with the beta clamp from PolIII. The sequence is that of DNA polymerase IV from Streptococcus pyogenes serotype M2 (strain MGAS10270).